The sequence spans 546 residues: Delta-1-pyrroline-5-carboxylate dehydrogenase (546 aa).

279 to 284 contacts NAD(+); the sequence is KDISSN. The active-site Proton acceptor is the E297. The active-site Nucleophile is C331.

The protein belongs to the aldehyde dehydrogenase family.

The protein localises to the cytoplasm. It carries out the reaction L-glutamate 5-semialdehyde + NAD(+) + H2O = L-glutamate + NADH + 2 H(+). It participates in amino-acid degradation; L-proline degradation into L-glutamate; L-glutamate from L-proline: step 2/2. The sequence is that of Delta-1-pyrroline-5-carboxylate dehydrogenase (pruA) from Agaricus bisporus (White button mushroom).